Reading from the N-terminus, the 69-residue chain is U-Asilidin(12)-Dg3a (69 aa).

A signal peptide spans M1–A19. Residues S20–R33 constitute a propeptide that is removed on maturation. Intrachain disulfides connect C36–C59, C45–C65, and C49–C67.

It belongs to the asilidin-12 family. As to expression, expressed by the venom gland.

It is found in the secreted. In terms of biological role, moderately increases Kv11.1/KCNH2/ERG1 currents and shifts the voltage-dependence of the channel activation to hyperpolarised potentials. In vivo, induces neurotoxic effects when injected into insects (tested on L.cuprina and A.domesticus). This chain is U-Asilidin(12)-Dg3a, found in Dolopus genitalis (Giant Australian assassin fly).